The sequence spans 441 residues: uncharacterized protein (441 aa).

57-64 (GVRRGGKT) contributes to the ATP binding site.

This is an uncharacterized protein from Methanocaldococcus jannaschii (strain ATCC 43067 / DSM 2661 / JAL-1 / JCM 10045 / NBRC 100440) (Methanococcus jannaschii).